We begin with the raw amino-acid sequence, 394 residues long: UPF0284 protein SYNW1869 (394 aa).

Belongs to the UPF0284 family.

This chain is UPF0284 protein SYNW1869, found in Parasynechococcus marenigrum (strain WH8102).